The sequence spans 251 residues: Probable caffeoyl-CoA O-methyltransferase 3 (251 aa).

S-adenosyl-L-methionine-binding positions include Thr-61, Asp-83, 85 to 86 (GV), Ser-91, Asp-109, and Ala-138. Asp-160 lines the a divalent metal cation pocket. Residue Asp-162 participates in S-adenosyl-L-methionine binding. 2 residues coordinate a divalent metal cation: Asp-186 and Asn-187.

It belongs to the class I-like SAM-binding methyltransferase superfamily. Cation-dependent O-methyltransferase family. CCoAMT subfamily.

The catalysed reaction is (E)-caffeoyl-CoA + S-adenosyl-L-methionine = (E)-feruloyl-CoA + S-adenosyl-L-homocysteine + H(+). This chain is Probable caffeoyl-CoA O-methyltransferase 3 (omt1), found in Dictyostelium discoideum (Social amoeba).